A 605-amino-acid chain; its full sequence is Elongation factor 4 (605 aa).

Residues 11-193 (KRIRNFSIIA…KVVSNIPSPR (183 aa)) enclose the tr-type G domain. Residues 23-28 (DHGKST) and 140-143 (NKID) contribute to the GTP site.

It belongs to the TRAFAC class translation factor GTPase superfamily. Classic translation factor GTPase family. LepA subfamily.

Its subcellular location is the cell membrane. The enzyme catalyses GTP + H2O = GDP + phosphate + H(+). In terms of biological role, required for accurate and efficient protein synthesis under certain stress conditions. May act as a fidelity factor of the translation reaction, by catalyzing a one-codon backward translocation of tRNAs on improperly translocated ribosomes. Back-translocation proceeds from a post-translocation (POST) complex to a pre-translocation (PRE) complex, thus giving elongation factor G a second chance to translocate the tRNAs correctly. Binds to ribosomes in a GTP-dependent manner. The polypeptide is Elongation factor 4 (Phytoplasma mali (strain AT)).